A 209-amino-acid chain; its full sequence is Large ribosomal subunit protein uL3 (209 aa).

This sequence belongs to the universal ribosomal protein uL3 family. In terms of assembly, part of the 50S ribosomal subunit. Forms a cluster with proteins L14 and L19.

Its function is as follows. One of the primary rRNA binding proteins, it binds directly near the 3'-end of the 23S rRNA, where it nucleates assembly of the 50S subunit. The protein is Large ribosomal subunit protein uL3 of Lactiplantibacillus plantarum (strain ATCC BAA-793 / NCIMB 8826 / WCFS1) (Lactobacillus plantarum).